The sequence spans 239 residues: Proteasome activator complex subunit 2 (239 aa).

Ala-2 carries the N-acetylalanine modification. Residue Ser-10 is modified to Phosphoserine. The segment at 65 to 86 (DIPIPDPPPKDDEMETDKQEKK) is disordered. The segment covering 72 to 86 (PPKDDEMETDKQEKK) has biased composition (basic and acidic residues).

It belongs to the PA28 family. In terms of assembly, heterodimer of PSME1 and PSME2, which forms a hexameric ring.

Functionally, implicated in immunoproteasome assembly and required for efficient antigen processing. The PA28 activator complex enhances the generation of class I binding peptides by altering the cleavage pattern of the proteasome. This chain is Proteasome activator complex subunit 2 (PSME2), found in Bos taurus (Bovine).